A 275-amino-acid chain; its full sequence is Reticulon-like protein B1 (275 aa).

Composition is skewed to basic and acidic residues over residues 1-10 (MAEEHKHDES) and 20-38 (VVER…HHGG). Positions 1-68 (MAEEHKHDES…PSSPSSSMKS (68 aa)) are disordered. Position 2 is an N-acetylalanine (A2). A compositionally biased stretch (low complexity) spans 59–68 (PSSPSSSMKS). One can recognise a Reticulon domain in the interval 89–274 (PADIFMWKNK…PLGPLKNKKK (186 aa)). The next 3 membrane-spanning stretches (helical) occupy residues 99 to 119 (KMSG…ELME), 120 to 140 (YHLL…LFLW), and 194 to 214 (FLIA…FNFL).

In terms of assembly, interacts with VirB2. In terms of tissue distribution, predominantly expressed in root tissues.

The protein localises to the endoplasmic reticulum membrane. The protein resides in the cell membrane. Its function is as follows. Plays a role in the Agrobacterium-mediated plant transformation via its interaction with VirB2, the major component of the T-pilus. This chain is Reticulon-like protein B1 (RTNLB1), found in Arabidopsis thaliana (Mouse-ear cress).